The sequence spans 69 residues: Chondroitin proteoglycan 9 (69 aa).

Positions 1–19 are cleaved as a signal peptide; the sequence is MHLWQLVLLVILFFGAAFG. O-linked (Xyl...) (chondroitin sulfate) serine glycans are attached at residues Ser-25 and Ser-27.

In Caenorhabditis elegans, this protein is Chondroitin proteoglycan 9.